We begin with the raw amino-acid sequence, 316 residues long: Transaldolase (316 aa).

Catalysis depends on Lys-132, which acts as the Schiff-base intermediate with substrate.

The protein belongs to the transaldolase family. Type 1 subfamily. As to quaternary structure, homodimer.

Its subcellular location is the cytoplasm. It carries out the reaction D-sedoheptulose 7-phosphate + D-glyceraldehyde 3-phosphate = D-erythrose 4-phosphate + beta-D-fructose 6-phosphate. It participates in carbohydrate degradation; pentose phosphate pathway; D-glyceraldehyde 3-phosphate and beta-D-fructose 6-phosphate from D-ribose 5-phosphate and D-xylulose 5-phosphate (non-oxidative stage): step 2/3. Its function is as follows. Transaldolase is important for the balance of metabolites in the pentose-phosphate pathway. The chain is Transaldolase from Vibrio vulnificus (strain YJ016).